The sequence spans 477 residues: Bifunctional enzyme PyrF/PyrE (477 aa).

The segment at 1–273 (MIFFDKLHQN…ITVRDVASCS (273 aa)) is OMP decarboxylase. Lys96 acts as the Proton donor in catalysis. Positions 274-477 (VWLPDVFTVK…DEQFLALTAE (204 aa)) are orotate phosphoribosyltransferase. Residues Arg374, Lys375, Lys378, His380, and 400–408 (DDILISGKS) each bind 5-phospho-alpha-D-ribose 1-diphosphate.

In the N-terminal section; belongs to the OMP decarboxylase family. Type 2 subfamily. It in the C-terminal section; belongs to the purine/pyrimidine phosphoribosyltransferase family. Mg(2+) serves as cofactor.

The catalysed reaction is orotidine 5'-phosphate + H(+) = UMP + CO2. It carries out the reaction orotidine 5'-phosphate + diphosphate = orotate + 5-phospho-alpha-D-ribose 1-diphosphate. The protein operates within pyrimidine metabolism; UMP biosynthesis via de novo pathway; UMP from orotate: step 1/2. Its pathway is pyrimidine metabolism; UMP biosynthesis via de novo pathway; UMP from orotate: step 2/2. Catalyzes the transfer of a ribosyl phosphate group from 5-phosphoribose 1-diphosphate to orotate, leading to the formation of orotidine monophosphate (OMP). Its function is as follows. Catalyzes the decarboxylation of orotidine monophosphate (OMP) to uridine monophosphate (UMP). The chain is Bifunctional enzyme PyrF/PyrE (pyrFE) from Nostoc sp. (strain PCC 7120 / SAG 25.82 / UTEX 2576).